We begin with the raw amino-acid sequence, 121 residues long: Iron-sulfur cluster assembly protein CyaY (121 aa).

Belongs to the frataxin family.

Involved in iron-sulfur (Fe-S) cluster assembly. May act as a regulator of Fe-S biogenesis. This chain is Iron-sulfur cluster assembly protein CyaY, found in Buchnera aphidicola subsp. Schizaphis graminum (strain Sg).